The primary structure comprises 222 residues: Triosephosphate isomerase (222 aa).

Substrate is bound at residue 9–11; sequence NYK. H93 functions as the Electrophile in the catalytic mechanism. The Proton acceptor role is filled by E141. Residues I146, G181, and 202 to 203 contribute to the substrate site; that span reads AS.

The protein belongs to the triosephosphate isomerase family. In terms of assembly, homotetramer; dimer of dimers.

Its subcellular location is the cytoplasm. The enzyme catalyses D-glyceraldehyde 3-phosphate = dihydroxyacetone phosphate. It functions in the pathway carbohydrate biosynthesis; gluconeogenesis. It participates in carbohydrate degradation; glycolysis; D-glyceraldehyde 3-phosphate from glycerone phosphate: step 1/1. Involved in the gluconeogenesis. Catalyzes stereospecifically the conversion of dihydroxyacetone phosphate (DHAP) to D-glyceraldehyde-3-phosphate (G3P). The chain is Triosephosphate isomerase from Methanosarcina acetivorans (strain ATCC 35395 / DSM 2834 / JCM 12185 / C2A).